Here is a 568-residue protein sequence, read N- to C-terminus: Multidrug and toxin extrusion protein 1 (568 aa).

An N-acetylmethionine modification is found at Met1. Topologically, residues 1 to 36 (MEAPVELGPGGRQASPERRHWLRCLVLSDFREELRA) are cytoplasmic. A helical membrane pass occupies residues 37 to 57 (LLVLACPAFLAQLMVFLISFV). Residues 58 to 71 (SSVFCGHLSKLELN) are Extracellular-facing. The chain crosses the membrane as a helical span at residues 72-92 (AVTLAIAVINVMGVSVGFGLS). Residues 93–119 (SACDTLISQTYGSRNLKHVGVILQRGS) lie on the Cytoplasmic side of the membrane. Residues 120-140 (LILLLCCLPCWALFLNTQHIL) traverse the membrane as a helical segment. Residues 141 to 151 (LLFRQDPAVSR) lie on the Extracellular side of the membrane. Residues 152–172 (LTQTYVTIFIPALPATFLYTL) form a helical membrane-spanning segment. Residues 173–175 (QVK) lie on the Cytoplasmic side of the membrane. The chain crosses the membrane as a helical span at residues 176-196 (YLLNQGIVLPQVVTGVAANLV). The Extracellular portion of the chain corresponds to 197 to 214 (NALANYLFVYQLHLGVMG). Residues 215 to 235 (SALANTVAQFTLALLLFLYIL) traverse the membrane as a helical segment. At 236 to 255 (RSKVYQATWGGWSLECLQDW) the chain is on the cytoplasmic side. The helical transmembrane segment at 256-278 (ASFFRLAIPSMLMLCMEWWAYEI) threads the bilayer. At 279–294 (GSFLSGILGMVELGAQ) the chain is on the extracellular side. Residues 295-315 (SVTYELAVIVYMIPMGLSVAV) traverse the membrane as a helical segment. At 316–335 (NVRVGNALGAGNIEQAKKSS) the chain is on the cytoplasmic side. The chain crosses the membrane as a helical span at residues 336 to 356 (AVALLVTELIAVVFCVMLLSC). Topologically, residues 357–369 (KDLVGYIFTSDRD) are extracellular. Residues 370-390 (IIALVAQVTPIYAVSHLFESL) form a helical membrane-spanning segment. Over 391-407 (AGTSGGILRGSGNQKFG) the chain is Cytoplasmic. The helical transmembrane segment at 408–430 (AIVNAIGYYVVGLPIGIALMFAA) threads the bilayer. Residues 431–433 (KLG) lie on the Extracellular side of the membrane. A helical transmembrane segment spans residues 434-456 (VIGLWLGIVVCAVSQAVCFLGFI). At 457 to 544 (ARLNWTKACQ…LSGKQLALRR (88 aa)) the chain is on the cytoplasmic side. A helical membrane pass occupies residues 545-565 (GLLLLGVILVLLAGILVKVYV). Over 566 to 568 (RTQ) the chain is Extracellular.

It belongs to the multi antimicrobial extrusion (MATE) (TC 2.A.66.1) family. As to expression, predominantly expressed in kidney and liver.

The protein localises to the cell membrane. The protein resides in the apical cell membrane. The enzyme catalyses thiamine(out) + H(+)(in) = thiamine(in) + H(+)(out). It carries out the reaction estrone 3-sulfate(in) + H(+)(out) = estrone 3-sulfate(out) + H(+)(in). It catalyses the reaction creatinine(in) + H(+)(out) = creatinine(out) + H(+)(in). The catalysed reaction is agmatine(in) + H(+)(out) = agmatine(out) + H(+)(in). Its function is as follows. Multidrug efflux pump that functions as a H(+)/organic cation antiporter. Plays a physiological role in the excretion of cationic compounds including endogenous metabolites, drugs, toxins through the kidney and liver, into urine and bile respectively. Mediates the efflux of endogenous compounds such as creatinine, vitamin B1/thiamine, agmatine and estrone-3-sulfate. May also contribute to regulate the transport of cationic compounds in testis across the blood-testis-barrier. This Oryctolagus cuniculus (Rabbit) protein is Multidrug and toxin extrusion protein 1 (SLC47A1).